The chain runs to 696 residues: Equisetin cluster transcription factor eqxF (696 aa).

Disordered regions lie at residues 1–24 (MADQ…GRAR) and 73–117 (NQEQ…PADY).

It is found in the nucleus. In terms of biological role, transcription factor that regulates the expression of the gene cluster that mediates the biosynthesis of Equisetin. In Fusarium heterosporum, this protein is Equisetin cluster transcription factor eqxF.